The sequence spans 639 residues: Protein argonaute (639 aa).

The N-terminal domain stretch occupies residues 1–100 (MYLNLYKIDI…YIKKLFLDND (100 aa)). The tract at residues 101–153 (FYFKKGNNFISNSEVFSLDSNENVNAHLTYKIKIHNISNEYYLSILPKFTFLS) is linker L1. The PAZ domain stretch occupies residues 154–209 (KEPALESAIKSGYLYNIKSGKSFPYISGLDGILKIDIGNNQIVEVAYPENYLFNFT). Residues 210-292 (TRDAEKYGFS…KYSFYKNEQP (83 aa)) are linker L2. Positions 293–424 (LKAIFFFSSK…YVYKMGNFIP (132 aa)) are mid domain. A PIWI domain region spans residues 425-639 (ECKPFILKKM…DYEWKLYIPY (215 aa)). Catalysis depends on residues Asp446, Glu482, Asp516, and Asn624. Residue Asp446 participates in Mn(2+) binding. Mn(2+) is bound by residues Asp516 and Asn624.

The protein belongs to the argonaute family. Long pAgo subfamily. Mn(2+) serves as cofactor.

The protein localises to the cytoplasm. Its function is as follows. An RNA-guided ssDNA endonuclease that may play a role in defense against invading mobile genetic elements. Uses short 5'-OH-ssRNA sequences as guides (gRNA) to bind complementary target DNA (tDNA) or target RNA resulting in target cleavage. The cleavage site is 10 nucleotides (nt) downstream of the target residue base-paired with the 5'-end of the gRNA. Reaction rates are fastest on 5'-OH-gRNA:tDNA followed by 5'-OH-gRNA:target RNA. gRNA between 17-21 nt supports equivalent rates of cleavage, has no preferred 5'-nt. Has weak activity on tDNA with 5'-phospho-gRNA, yielding products 1-2 nt longer. Unlike other characterized prokaryotic Ago proteins symmetric mismatches centered around the cleavage site reduce cleavage efficiency. This is Protein argonaute from Marinitoga piezophila (strain DSM 14283 / JCM 11233 / KA3).